Consider the following 115-residue polypeptide: uncharacterized protein (115 aa).

This is an uncharacterized protein from Saccharomyces cerevisiae (strain ATCC 204508 / S288c) (Baker's yeast).